Consider the following 795-residue polypeptide: Probable diacylglycerol kinase 3 (795 aa).

2 EF-hand domains span residues 170–205 and 215–250; these read TPENKLDVVFHVYDSDGNGFLDKSEIDGIIEQMMNV and ELEQVIRQMMVDIDYDNDGIVSFDEWRRGGLTNIPL. Ca(2+) is bound by residues aspartate 183, aspartate 185, asparagine 187, glutamate 194, aspartate 228, aspartate 230, aspartate 232, and glutamate 239. 2 Phorbol-ester/DAG-type zinc fingers span residues 265–316 and 329–375; these read SHVW…ATNC and YHHW…AQEC. The region spanning 423–558 is the DAGKc domain; sequence NDCRPLLVLV…MDRWQIKIEI (136 aa).

The protein belongs to the eukaryotic diacylglycerol kinase family. In terms of assembly, monomer.

The enzyme catalyses a 1,2-diacyl-sn-glycerol + ATP = a 1,2-diacyl-sn-glycero-3-phosphate + ADP + H(+). In terms of biological role, involved in AFD-neuron mediated thermotaxis. Regulates behavior to environmental temperature. Thought to have a role in olfactory adaptation by affecting diacylglycerol levels. The protein is Probable diacylglycerol kinase 3 (dgk-3) of Caenorhabditis elegans.